Consider the following 202-residue polypeptide: Protein Mbar_A1807 (202 aa).

The 192-residue stretch at 5 to 196 (VEGRAAVKLA…EKEPCGEVLE (192 aa)) folds into the AMMECR1 domain.

This chain is Protein Mbar_A1807, found in Methanosarcina barkeri (strain Fusaro / DSM 804).